A 427-amino-acid polypeptide reads, in one-letter code: Glutamate-1-semialdehyde 2,1-aminomutase (427 aa).

Position 263 is an N6-(pyridoxal phosphate)lysine (Lys-263).

Belongs to the class-III pyridoxal-phosphate-dependent aminotransferase family. HemL subfamily. In terms of assembly, homodimer. Pyridoxal 5'-phosphate serves as cofactor.

It localises to the cytoplasm. It carries out the reaction (S)-4-amino-5-oxopentanoate = 5-aminolevulinate. It participates in porphyrin-containing compound metabolism; protoporphyrin-IX biosynthesis; 5-aminolevulinate from L-glutamyl-tRNA(Glu): step 2/2. The protein is Glutamate-1-semialdehyde 2,1-aminomutase of Caldicellulosiruptor saccharolyticus (strain ATCC 43494 / DSM 8903 / Tp8T 6331).